The chain runs to 525 residues: GMP synthase [glutamine-hydrolyzing] (525 aa).

Residues 9 to 207 (RILILDFGSQ…ILDICGCEAL (199 aa)) form the Glutamine amidotransferase type-1 domain. Cys-86 acts as the Nucleophile in catalysis. Active-site residues include His-181 and Glu-183. The region spanning 208 to 400 (WTPSKIAEDA…LGLPYDMVYR (193 aa)) is the GMPS ATP-PPase domain. 235–241 (SGGVDSS) is a binding site for ATP.

Homodimer.

The enzyme catalyses XMP + L-glutamine + ATP + H2O = GMP + L-glutamate + AMP + diphosphate + 2 H(+). Its pathway is purine metabolism; GMP biosynthesis; GMP from XMP (L-Gln route): step 1/1. Functionally, catalyzes the synthesis of GMP from XMP. This is GMP synthase [glutamine-hydrolyzing] from Pseudomonas savastanoi pv. phaseolicola (strain 1448A / Race 6) (Pseudomonas syringae pv. phaseolicola (strain 1448A / Race 6)).